Reading from the N-terminus, the 296-residue chain is Nucleotide-binding protein stu0831 (296 aa).

ATP is bound at residue 13-20 (GMSGAGKT). 63–66 (DMRS) lines the GTP pocket.

Belongs to the RapZ-like family.

In terms of biological role, displays ATPase and GTPase activities. The polypeptide is Nucleotide-binding protein stu0831 (Streptococcus thermophilus (strain ATCC BAA-250 / LMG 18311)).